Reading from the N-terminus, the 80-residue chain is Cytochrome c oxidase subunit 7B, mitochondrial (80 aa).

A mitochondrion-targeting transit peptide spans 1–24 (MFPLVKNALNRLQVRSIQQTMARQ). Residues 25–32 (SHQKRTPD) lie on the Mitochondrial matrix side of the membrane. Residues 33-59 (FHDKYGNAVLASGATFCIVTWTYVATQ) traverse the membrane as a helical segment. At 60 to 80 (VGIEWNLSPVGRVTPKEWRNQ) the chain is on the mitochondrial intermembrane side.

This sequence belongs to the cytochrome c oxidase VIIb family. Component of the cytochrome c oxidase (complex IV, CIV), a multisubunit enzyme composed of 14 subunits. The complex is composed of a catalytic core of 3 subunits MT-CO1, MT-CO2 and MT-CO3, encoded in the mitochondrial DNA, and 11 supernumerary subunits COX4I, COX5A, COX5B, COX6A, COX6B, COX6C, COX7A, COX7B, COX7C, COX8 and NDUFA4, which are encoded in the nuclear genome. The complex exists as a monomer or a dimer and forms supercomplexes (SCs) in the inner mitochondrial membrane with NADH-ubiquinone oxidoreductase (complex I, CI) and ubiquinol-cytochrome c oxidoreductase (cytochrome b-c1 complex, complex III, CIII), resulting in different assemblies (supercomplex SCI(1)III(2)IV(1) and megacomplex MCI(2)III(2)IV(2)).

It is found in the mitochondrion inner membrane. It participates in energy metabolism; oxidative phosphorylation. Component of the cytochrome c oxidase, the last enzyme in the mitochondrial electron transport chain which drives oxidative phosphorylation. The respiratory chain contains 3 multisubunit complexes succinate dehydrogenase (complex II, CII), ubiquinol-cytochrome c oxidoreductase (cytochrome b-c1 complex, complex III, CIII) and cytochrome c oxidase (complex IV, CIV), that cooperate to transfer electrons derived from NADH and succinate to molecular oxygen, creating an electrochemical gradient over the inner membrane that drives transmembrane transport and the ATP synthase. Cytochrome c oxidase is the component of the respiratory chain that catalyzes the reduction of oxygen to water. Electrons originating from reduced cytochrome c in the intermembrane space (IMS) are transferred via the dinuclear copper A center (CU(A)) of subunit 2 and heme A of subunit 1 to the active site in subunit 1, a binuclear center (BNC) formed by heme A3 and copper B (CU(B)). The BNC reduces molecular oxygen to 2 water molecules using 4 electrons from cytochrome c in the IMS and 4 protons from the mitochondrial matrix. Plays a role in proper central nervous system (CNS) development in vertebrates. This Pongo abelii (Sumatran orangutan) protein is Cytochrome c oxidase subunit 7B, mitochondrial (COX7B).